The following is a 130-amino-acid chain: Small ribosomal subunit protein uS9 (130 aa).

Belongs to the universal ribosomal protein uS9 family.

The polypeptide is Small ribosomal subunit protein uS9 (Pectobacterium atrosepticum (strain SCRI 1043 / ATCC BAA-672) (Erwinia carotovora subsp. atroseptica)).